The sequence spans 785 residues: Ubiquitin carboxyl-terminal hydrolase 10 (785 aa).

Polar residues-rich tracts occupy residues 113 to 122 (LTLDSGSNAE) and 262 to 277 (DTTE…TLES). Disordered regions lie at residues 113-145 (LTLD…PPGY) and 262-314 (DTTE…ATAT). Over residues 290–304 (HTVESTDSDQAKPEE) the composition is skewed to basic and acidic residues. Over residues 305-314 (ASPTTEATAT) the composition is skewed to low complexity. One can recognise a USP domain in the interval 401–782 (RGLINKGNWC…TAYLLYYRRV (382 aa)). Cysteine 410 (nucleophile) is an active-site residue. The disordered stretch occupies residues 537 to 581 (EKLSVSNGPEVQTVREEEEQDEQGEGSEDEWEQVGPRNKSSVTRQ). Residues 552–568 (EEEEQDEQGEGSEDEWE) show a composition bias toward acidic residues. Histidine 736 functions as the Proton acceptor in the catalytic mechanism.

It belongs to the peptidase C19 family. USP10 subfamily.

It localises to the cytoplasm. Its subcellular location is the nucleus. It carries out the reaction Thiol-dependent hydrolysis of ester, thioester, amide, peptide and isopeptide bonds formed by the C-terminal Gly of ubiquitin (a 76-residue protein attached to proteins as an intracellular targeting signal).. In terms of biological role, hydrolase that can remove conjugated ubiquitin from target proteins such as p53/TP53, RPS2/us5, RPS3/us3, RPS10/eS10, BECN1, SNX3 and CFTR. Acts as an essential regulator of p53/TP53 stability: in unstressed cells, specifically deubiquitinates p53/TP53 in the cytoplasm, leading to counteracts MDM2 action and stabilize p53/TP53. Following DNA damage, translocates to the nucleus and deubiquitinates p53/TP53, leading to regulate the p53/TP53-dependent DNA damage response. Component of a regulatory loop that controls autophagy and p53/TP53 levels. Plays a key role in 40S ribosome subunit recycling when a ribosome has stalled during translation: acts both by inhibiting formation of stress granules, which store stalled translation pre-initiation complexes, and mediating deubiquitination of 40S ribosome subunits. Deubiquitinates CFTR in early endosomes, enhancing its endocytic recycling. The polypeptide is Ubiquitin carboxyl-terminal hydrolase 10 (USP10) (Gallus gallus (Chicken)).